The sequence spans 205 residues: MDAIVKNFPLLDDTSGRPTQKEAEEAVRVLLRWAGEDPTREGLKDTPARVIKSYREIFGGYDLVAEDVLGRTFEEVSGYDDIVLEKDVPFYSHCEHHMVPIIGKAHVAYLPNGRVLGLSKIARVVDIYARRLQTQEAMTAQIARAIDETLAPRGVAVMIEAEHLCMAMRGIKKHGSTTLTTTFTGAFKTEPAEQARFMTLLRGFK.

Residues Cys-94, His-97, and Cys-165 each coordinate Zn(2+).

This sequence belongs to the GTP cyclohydrolase I family. Homomer.

It catalyses the reaction GTP + H2O = 7,8-dihydroneopterin 3'-triphosphate + formate + H(+). It participates in cofactor biosynthesis; 7,8-dihydroneopterin triphosphate biosynthesis; 7,8-dihydroneopterin triphosphate from GTP: step 1/1. The sequence is that of GTP cyclohydrolase 1 from Sinorhizobium fredii (strain NBRC 101917 / NGR234).